The following is an 804-amino-acid chain: Exocyst complex component 6 (804 aa).

The protein belongs to the SEC15 family. In terms of assembly, the exocyst complex is composed of EXOC1, EXOC2, EXOC3, EXOC4, EXOC5, EXOC6, EXOC7 and EXOC8. Interacts with CNTRL. Interacts with RAB11A in a GTP-dependent manner.

The protein localises to the cytoplasm. Its subcellular location is the perinuclear region. It localises to the cell projection. The protein resides in the growth cone. It is found in the midbody. The protein localises to the midbody ring. Component of the exocyst complex involved in the docking of exocytic vesicles with fusion sites on the plasma membrane. Together with RAB11A, RAB3IP, RAB8A, PARD3, PRKCI, ANXA2, CDC42 and DNMBP promotes transcytosis of PODXL to the apical membrane initiation sites (AMIS), apical surface formation and lumenogenesis. The sequence is that of Exocyst complex component 6 (Exoc6) from Rattus norvegicus (Rat).